The primary structure comprises 363 residues: Dihydroorotate dehydrogenase (quinone) (363 aa).

Residues 67 to 71 (AGLDK) and Thr91 contribute to the FMN site. Residue Lys71 participates in substrate binding. 116 to 120 (NRMGF) contacts substrate. 2 residues coordinate FMN: Asn145 and Asn178. Asn178 contacts substrate. The active-site Nucleophile is the Ser181. Asn183 contributes to the substrate binding site. Residues Lys219 and Thr247 each contribute to the FMN site. 248–249 (NT) lines the substrate pocket. FMN contacts are provided by residues Gly268, Gly297, and 318–319 (YT).

Belongs to the dihydroorotate dehydrogenase family. Type 2 subfamily. As to quaternary structure, monomer. It depends on FMN as a cofactor.

The protein localises to the cell membrane. The catalysed reaction is (S)-dihydroorotate + a quinone = orotate + a quinol. It functions in the pathway pyrimidine metabolism; UMP biosynthesis via de novo pathway; orotate from (S)-dihydroorotate (quinone route): step 1/1. Functionally, catalyzes the conversion of dihydroorotate to orotate with quinone as electron acceptor. In Myxococcus xanthus (strain DK1622), this protein is Dihydroorotate dehydrogenase (quinone).